The primary structure comprises 269 residues: Formamidopyrimidine-DNA glycosylase (269 aa).

Catalysis depends on proline 2, which acts as the Schiff-base intermediate with DNA. The active-site Proton donor is the glutamate 3. Lysine 57 serves as the catalytic Proton donor; for beta-elimination activity. Residues histidine 90, arginine 109, and arginine 150 each coordinate DNA. Residues 235–269 form an FPG-type zinc finger; it reads QVYGRKGEPCRVCGTPVVATKHAQRATFYCRHCQK. The active-site Proton donor; for delta-elimination activity is the arginine 259.

The protein belongs to the FPG family. In terms of assembly, monomer. It depends on Zn(2+) as a cofactor.

The catalysed reaction is Hydrolysis of DNA containing ring-opened 7-methylguanine residues, releasing 2,6-diamino-4-hydroxy-5-(N-methyl)formamidopyrimidine.. It catalyses the reaction 2'-deoxyribonucleotide-(2'-deoxyribose 5'-phosphate)-2'-deoxyribonucleotide-DNA = a 3'-end 2'-deoxyribonucleotide-(2,3-dehydro-2,3-deoxyribose 5'-phosphate)-DNA + a 5'-end 5'-phospho-2'-deoxyribonucleoside-DNA + H(+). Functionally, involved in base excision repair of DNA damaged by oxidation or by mutagenic agents. Acts as a DNA glycosylase that recognizes and removes damaged bases. Has a preference for oxidized purines, such as 7,8-dihydro-8-oxoguanine (8-oxoG). Has AP (apurinic/apyrimidinic) lyase activity and introduces nicks in the DNA strand. Cleaves the DNA backbone by beta-delta elimination to generate a single-strand break at the site of the removed base with both 3'- and 5'-phosphates. This is Formamidopyrimidine-DNA glycosylase from Salmonella arizonae (strain ATCC BAA-731 / CDC346-86 / RSK2980).